Reading from the N-terminus, the 198-residue chain is Recombination protein RecR (198 aa).

The C4-type zinc finger occupies Cys57–Cys72. The Toprim domain occupies Thr80–Pro175.

It belongs to the RecR family.

In terms of biological role, may play a role in DNA repair. It seems to be involved in an RecBC-independent recombinational process of DNA repair. It may act with RecF and RecO. This is Recombination protein RecR from Burkholderia cenocepacia (strain HI2424).